The chain runs to 236 residues: Large ribosomal subunit protein uL3 (236 aa).

Positions 139–163 (ARDSSTTHEHHRHVGAIGQRKTPGK) are disordered.

This sequence belongs to the universal ribosomal protein uL3 family. As to quaternary structure, part of the 50S ribosomal subunit. Forms a cluster with proteins L14 and L19.

Functionally, one of the primary rRNA binding proteins, it binds directly near the 3'-end of the 23S rRNA, where it nucleates assembly of the 50S subunit. The sequence is that of Large ribosomal subunit protein uL3 from Anaeromyxobacter sp. (strain Fw109-5).